We begin with the raw amino-acid sequence, 694 residues long: Envelope glycoprotein H (694 aa).

A signal peptide spans 1–16; the sequence is MLFRLWVFVLLTPCYS. At 17–671 the chain is on the virion surface side; sequence WRPWTISDES…GIDIDQVSII (655 aa). N-linked (GlcNAc...) asparagine; by host glycosylation is found at Asn51, Asn76, Asn148, Asn206, Asn337, Asn365, Asn384, Asn411, Asn538, Asn573, Asn593, and Asn652. Residues 174–234 form an interaction with gL region; that stretch reads YAGENIYTHF…QTLTDDLLLI (61 aa). The helical transmembrane segment at 672–692 threads the bilayer; it reads LVIIYVLIAIIALFGLYRLIR. The Intravirion segment spans residues 693 to 694; that stretch reads LC.

This sequence belongs to the herpesviridae glycoprotein H family. In terms of assembly, interacts with glycoprotein L (gL); this interaction is necessary for the correct processing and cell surface expression of gH. The heterodimer gH/gL seems to interact with gB trimers during fusion. N-glycosylated, O-glycosylated, and sialylated.

It is found in the virion membrane. It localises to the host cell membrane. Its subcellular location is the host endosome membrane. Functionally, the heterodimer glycoprotein H-glycoprotein L is required for the fusion of viral and plasma membranes leading to virus entry into the host cell. Following initial binding to host receptor, membrane fusion is mediated by the fusion machinery composed of gB and the heterodimer gH/gL. May also be involved in the fusion between the virion envelope and the outer nuclear membrane during virion morphogenesis. This is Envelope glycoprotein H from Human herpesvirus 6B (strain Z29) (HHV-6 variant B).